Here is a 311-residue protein sequence, read N- to C-terminus: Putative ribose-phosphate pyrophosphokinase 2 (311 aa).

Residues 38 to 40 and 97 to 98 each bind ATP; these read DGE and RQ. Residues H131 and D171 each contribute to the Mg(2+) site. Position 219 (D219) interacts with D-ribose 5-phosphate.

It belongs to the ribose-phosphate pyrophosphokinase family. Class I subfamily. In terms of assembly, homohexamer. It depends on Mg(2+) as a cofactor.

Its subcellular location is the cytoplasm. The enzyme catalyses D-ribose 5-phosphate + ATP = 5-phospho-alpha-D-ribose 1-diphosphate + AMP + H(+). It participates in metabolic intermediate biosynthesis; 5-phospho-alpha-D-ribose 1-diphosphate biosynthesis; 5-phospho-alpha-D-ribose 1-diphosphate from D-ribose 5-phosphate (route I): step 1/1. Involved in the biosynthesis of the central metabolite phospho-alpha-D-ribosyl-1-pyrophosphate (PRPP) via the transfer of pyrophosphoryl group from ATP to 1-hydroxyl of ribose-5-phosphate (Rib-5-P). This Listeria monocytogenes serotype 4b (strain F2365) protein is Putative ribose-phosphate pyrophosphokinase 2.